A 60-amino-acid chain; its full sequence is Protein P7 (60 aa).

The helical transmembrane segment at 28 to 48 threads the bilayer; it reads FIGVTLIGMFISYYLYALISI.

The protein localises to the host membrane. The protein is Protein P7 of Vitis vinifera (Grape).